The primary structure comprises 82 residues: Small ribosomal subunit protein bS18 (82 aa).

The protein belongs to the bacterial ribosomal protein bS18 family. In terms of assembly, part of the 30S ribosomal subunit. Forms a tight heterodimer with protein bS6.

In terms of biological role, binds as a heterodimer with protein bS6 to the central domain of the 16S rRNA, where it helps stabilize the platform of the 30S subunit. In Bartonella bacilliformis (strain ATCC 35685 / KC583 / Herrer 020/F12,63), this protein is Small ribosomal subunit protein bS18.